We begin with the raw amino-acid sequence, 276 residues long: Ribosomal RNA small subunit methyltransferase A (276 aa).

Residues N27, L29, G54, E75, D101, and N122 each contribute to the S-adenosyl-L-methionine site.

It belongs to the class I-like SAM-binding methyltransferase superfamily. rRNA adenine N(6)-methyltransferase family. RsmA subfamily.

The protein localises to the cytoplasm. The enzyme catalyses adenosine(1518)/adenosine(1519) in 16S rRNA + 4 S-adenosyl-L-methionine = N(6)-dimethyladenosine(1518)/N(6)-dimethyladenosine(1519) in 16S rRNA + 4 S-adenosyl-L-homocysteine + 4 H(+). Specifically dimethylates two adjacent adenosines (A1518 and A1519) in the loop of a conserved hairpin near the 3'-end of 16S rRNA in the 30S particle. May play a critical role in biogenesis of 30S subunits. This is Ribosomal RNA small subunit methyltransferase A from Brucella melitensis biotype 1 (strain ATCC 23456 / CCUG 17765 / NCTC 10094 / 16M).